Reading from the N-terminus, the 267-residue chain is MRILVEIAYQGNQFLGFQIQQQGRTVQQQFEKILKRMHKHHVRIHPSSRTDRGVHAYQQFFHFDTELNIDNKQWQYAMNRALPDDIYVKNVRNVDEYFHCRYDCVGKRYRYKVYQGNHRNPFKSGTETFVNETLDYDKMNKAAQEFIGTHDFTGFCSQKTEVESKVRTLYQSEIVATKEGFDYVVTGSGFLYNMVRVLVAFLIEVGKGKREPNDVPKLLEDKNRNNVPLTAPPDGLYLEKIYLSPEELIQEYGKDIKIHYKKSLEKH.

D51 functions as the Nucleophile in the catalytic mechanism. Y109 lines the substrate pocket.

The protein belongs to the tRNA pseudouridine synthase TruA family. In terms of assembly, homodimer.

It carries out the reaction uridine(38/39/40) in tRNA = pseudouridine(38/39/40) in tRNA. In terms of biological role, formation of pseudouridine at positions 38, 39 and 40 in the anticodon stem and loop of transfer RNAs. This chain is tRNA pseudouridine synthase A, found in Staphylococcus epidermidis (strain ATCC 12228 / FDA PCI 1200).